A 71-amino-acid chain; its full sequence is ATP synthase subunit c (71 aa).

2 helical membrane-spanning segments follow: residues 5–25 (AIGI…AIIV) and 47–67 (FIGA…AFLL).

It belongs to the ATPase C chain family. In terms of assembly, F-type ATPases have 2 components, F(1) - the catalytic core - and F(0) - the membrane proton channel. F(1) has five subunits: alpha(3), beta(3), gamma(1), delta(1), epsilon(1). F(0) has three main subunits: a(1), b(2) and c(10-14). The alpha and beta chains form an alternating ring which encloses part of the gamma chain. F(1) is attached to F(0) by a central stalk formed by the gamma and epsilon chains, while a peripheral stalk is formed by the delta and b chains.

The protein localises to the cell membrane. F(1)F(0) ATP synthase produces ATP from ADP in the presence of a proton or sodium gradient. F-type ATPases consist of two structural domains, F(1) containing the extramembraneous catalytic core and F(0) containing the membrane proton channel, linked together by a central stalk and a peripheral stalk. During catalysis, ATP synthesis in the catalytic domain of F(1) is coupled via a rotary mechanism of the central stalk subunits to proton translocation. In terms of biological role, key component of the F(0) channel; it plays a direct role in translocation across the membrane. A homomeric c-ring of between 10-14 subunits forms the central stalk rotor element with the F(1) delta and epsilon subunits. This is ATP synthase subunit c from Shouchella clausii (strain KSM-K16) (Alkalihalobacillus clausii).